Reading from the N-terminus, the 282-residue chain is UDP-3-O-acyl-N-acetylglucosamine deacetylase (282 aa).

Positions 80, 240, and 244 each coordinate Zn(2+). Catalysis depends on His267, which acts as the Proton donor.

It belongs to the LpxC family. The cofactor is Zn(2+).

The protein resides in the plastid. It localises to the chloroplast. The catalysed reaction is a UDP-3-O-[(3R)-3-hydroxyacyl]-N-acetyl-alpha-D-glucosamine + H2O = a UDP-3-O-[(3R)-3-hydroxyacyl]-alpha-D-glucosamine + acetate. Its pathway is glycolipid biosynthesis; lipid IV(A) biosynthesis; lipid IV(A) from (3R)-3-hydroxytetradecanoyl-[acyl-carrier-protein] and UDP-N-acetyl-alpha-D-glucosamine: step 2/6. Its function is as follows. Catalyzes the hydrolysis of UDP-3-O-myristoyl-N-acetylglucosamine to form UDP-3-O-myristoylglucosamine and acetate. Involved in the biosynthesis of lipid A, a phosphorylated glycolipid that in bacteria anchors the lipopolysaccharide to the outer membrane of the cell. The target for the lipopolysaccharides produced in the chloroplast could either be the cell envelope of the eukaryote or the plastid membrane. This chain is UDP-3-O-acyl-N-acetylglucosamine deacetylase, found in Cyanidium caldarium (Red alga).